The sequence spans 304 residues: uncharacterized protein (304 aa).

NAD(+)-binding positions include 136–137 (GI), 215–217 (VGR), and Asp-241. Residue Arg-217 is part of the active site. Residue Glu-246 is part of the active site. His-265 serves as the catalytic Proton donor. An NAD(+)-binding site is contributed by 265–268 (HTAN).

It belongs to the D-isomer specific 2-hydroxyacid dehydrogenase family.

This is an uncharacterized protein from Corynebacterium melassecola.